We begin with the raw amino-acid sequence, 339 residues long: Anthranilate phosphoribosyltransferase (339 aa).

Residues glycine 80, 83-84, 90-93, 108-116, and serine 120 contribute to the 5-phospho-alpha-D-ribose 1-diphosphate site; these read GD, NVST, and KHGNRSVTS. Residue glycine 80 coordinates anthranilate. Residue serine 92 participates in Mg(2+) binding. Asparagine 111 contacts anthranilate. Arginine 166 lines the anthranilate pocket. Residues aspartate 225 and glutamate 226 each coordinate Mg(2+).

Belongs to the anthranilate phosphoribosyltransferase family. As to quaternary structure, homodimer. Mg(2+) serves as cofactor.

It catalyses the reaction N-(5-phospho-beta-D-ribosyl)anthranilate + diphosphate = 5-phospho-alpha-D-ribose 1-diphosphate + anthranilate. It functions in the pathway amino-acid biosynthesis; L-tryptophan biosynthesis; L-tryptophan from chorismate: step 2/5. Functionally, catalyzes the transfer of the phosphoribosyl group of 5-phosphorylribose-1-pyrophosphate (PRPP) to anthranilate to yield N-(5'-phosphoribosyl)-anthranilate (PRA). The protein is Anthranilate phosphoribosyltransferase of Ignicoccus hospitalis (strain KIN4/I / DSM 18386 / JCM 14125).